The sequence spans 507 residues: Interleukin-17 receptor E-like protein (507 aa).

The N-terminal stretch at methionine 1 to alanine 21 is a signal peptide.

It localises to the secreted. This Homo sapiens (Human) protein is Interleukin-17 receptor E-like protein.